Here is a 753-residue protein sequence, read N- to C-terminus: Glycerophosphodiester phosphodiesterase GDPDL6 (753 aa).

A signal peptide spans 1-17; that stretch reads MLRFFILFSLFLHSSVA. 2 consecutive GP-PDE domains span residues 41–339 and 355–654; these read PAVV…SQSI and ALVI…TRYL. Residues Asn-304, Asn-516, Asn-603, and Asn-715 are each glycosylated (N-linked (GlcNAc...) asparagine). The segment at 707–729 is disordered; sequence PPVAKLASNGTEGGPPQTPPRSG. Residues 731 to 751 form a helical membrane-spanning segment; that stretch reads VAIAANLSLSLLAMMALGLLY.

The protein belongs to the glycerophosphoryl diester phosphodiesterase family. As to expression, expressed in flowers and siliques.

It is found in the membrane. It carries out the reaction a sn-glycero-3-phosphodiester + H2O = an alcohol + sn-glycerol 3-phosphate + H(+). This is Glycerophosphodiester phosphodiesterase GDPDL6 from Arabidopsis thaliana (Mouse-ear cress).